The following is a 389-amino-acid chain: Cellobiose 2-epimerase (389 aa).

The protein belongs to the cellobiose 2-epimerase family. As to quaternary structure, monomer.

The catalysed reaction is D-cellobiose = beta-D-glucosyl-(1-&gt;4)-D-mannopyranose. Catalyzes the reversible epimerization of cellobiose to 4-O-beta-D-glucopyranosyl-D-mannose (Glc-Man). Catalyzes epimerization but also isomerization for beta-1,4- and alpha-1,4-gluco-oligosaccharides. Can use cellobiose, lactose, cellotriose, maltose and maltotriose. This is Cellobiose 2-epimerase from Dictyoglomus turgidum (strain DSM 6724 / Z-1310).